A 618-amino-acid chain; its full sequence is Methionine--tRNA ligase (618 aa).

Positions 12-22 (YYVNAEPHLGH) match the 'HIGH' region motif. Residues cysteine 127, cysteine 130, cysteine 144, and histidine 147 each contribute to the Zn(2+) site. The 'KMSKS' region signature appears at 297 to 301 (KMSKT). Lysine 300 lines the ATP pocket. Residues 518–618 (DFAKVELRVA…GEVPPGAVVK (101 aa)) enclose the tRNA-binding domain.

Belongs to the class-I aminoacyl-tRNA synthetase family. MetG type 2A subfamily. Homodimer. It depends on Zn(2+) as a cofactor.

The protein resides in the cytoplasm. It catalyses the reaction tRNA(Met) + L-methionine + ATP = L-methionyl-tRNA(Met) + AMP + diphosphate. Functionally, is required not only for elongation of protein synthesis but also for the initiation of all mRNA translation through initiator tRNA(fMet) aminoacylation. The protein is Methionine--tRNA ligase (metG) of Thermus thermophilus (strain ATCC 27634 / DSM 579 / HB8).